The following is a 54-amino-acid chain: Small polypeptide DEVIL 12 (54 aa).

The interval Asn-20–Glu-51 is required for DVL/RTFL small polypeptide activity. N-linked (GlcNAc...) asparagine glycosylation occurs at Asn-26. The chain crosses the membrane as a helical span at residues Glu-31 to Cys-48.

It belongs to the DVL/RTFL small polypeptides family.

It is found in the cell membrane. Its function is as follows. Small polypeptide acting as a regulatory molecule which coordinates cellular responses required for differentiation, growth and development, probably by restricting polar cell proliferation in lateral organs and coordinating socket cell recruitment and differentiation at trichome sites. The chain is Small polypeptide DEVIL 12 from Arabidopsis thaliana (Mouse-ear cress).